The following is a 511-amino-acid chain: Maturase K (511 aa).

It belongs to the intron maturase 2 family. MatK subfamily.

It localises to the plastid. Its subcellular location is the chloroplast. Functionally, usually encoded in the trnK tRNA gene intron. Probably assists in splicing its own and other chloroplast group II introns. This is Maturase K from Hordeum jubatum (Foxtail barley).